The sequence spans 366 residues: Chorismate synthase (366 aa).

NADP(+) is bound at residue R46. FMN-binding positions include 122–124 (RSS), 243–244 (NG), G284, 299–303 (KPTPS), and R325.

Belongs to the chorismate synthase family. As to quaternary structure, homotetramer. The cofactor is FMNH2.

It catalyses the reaction 5-O-(1-carboxyvinyl)-3-phosphoshikimate = chorismate + phosphate. It functions in the pathway metabolic intermediate biosynthesis; chorismate biosynthesis; chorismate from D-erythrose 4-phosphate and phosphoenolpyruvate: step 7/7. Functionally, catalyzes the anti-1,4-elimination of the C-3 phosphate and the C-6 proR hydrogen from 5-enolpyruvylshikimate-3-phosphate (EPSP) to yield chorismate, which is the branch point compound that serves as the starting substrate for the three terminal pathways of aromatic amino acid biosynthesis. This reaction introduces a second double bond into the aromatic ring system. This Campylobacter hominis (strain ATCC BAA-381 / DSM 21671 / CCUG 45161 / LMG 19568 / NCTC 13146 / CH001A) protein is Chorismate synthase.